The primary structure comprises 204 residues: Ras-related protein RABG1 (204 aa).

12–19 (GDSGVGKT) lines the GTP pocket. The short motif at 34 to 42 (HNSTIYVDL) is the Effector region element. GTP is bound by residues 60–64 (DTAGQ), 122–125 (NKTD), and 155–156 (SA). Residues Cys-202 and Cys-204 are each lipidated (S-geranylgeranyl cysteine). Cys-204 carries the cysteine methyl ester modification.

The protein belongs to the small GTPase superfamily. Rab family.

The protein resides in the cell membrane. Its function is as follows. Intracellular vesicle trafficking and protein transport. This chain is Ras-related protein RABG1 (RABG1), found in Arabidopsis thaliana (Mouse-ear cress).